A 210-amino-acid chain; its full sequence is MGVRAQQKEKTRRSLVEAAFSQLSAERSFASLSLREVAREAGIAPTSFYRHFRDVDELGLTMVDESGLMLRQLMRQARQRIAKGGSVIRTSVSTFMEFIGNNPNAFRLLLRERSGTSAAFRAAVAREIQHFIAELADYLELENHMPRAFTEAQAEAMVTIVFSAGAEALDVGPEQRRQLEERLVLQLRMISKGAYYWYRREQEKMSHHSE.

One can recognise an HTH tetR-type domain in the interval 10 to 70 (KTRRSLVEAA…TMVDESGLML (61 aa)). The segment at residues 33-52 (SLREVAREAGIAPTSFYRHF) is a DNA-binding region (H-T-H motif).

As to quaternary structure, homodimer.

The protein resides in the cytoplasm. Its function is as follows. Represses the transcription of fabB, involved in unsaturated fatty acid (UFA) biosynthesis. By controlling UFA production, FabR directly influences the physical properties of the membrane bilayer. This Klebsiella pneumoniae subsp. pneumoniae (strain ATCC 700721 / MGH 78578) protein is HTH-type transcriptional repressor FabR.